A 348-amino-acid chain; its full sequence is 2-heptyl-4(1H)-quinolone synthase subunit PqsC (348 aa).

The active-site Acyl-thioester intermediate is Cys129. His269 is an active-site residue.

This sequence belongs to the thiolase-like superfamily. FabH family. As to quaternary structure, forms a tight complex with PqsB.

It localises to the cytoplasm. The enzyme catalyses (2-aminobenzoyl)acetate + octanoyl-CoA + H(+) = 2-heptyl-4(1H)-quinolone + CO2 + CoA + H2O. Its activity is regulated as follows. Folding of PqsC and binding of octanoate are promoted by PqsB. Binding of the octanoyl group probably increases the binding affinity of the complex for 2-ABA. Activity of the complex is inhibited by 2-aminoacetophenone (2-AA). Required for the biosynthesis of the quorum-sensing signaling molecules 2-heptyl-4(1H)-quinolone (HHQ) and 2-heptyl-3-hydroxy-4(1H)-quinolone (Pseudomonas quinolone signal or PQS), which are important for biofilm formation and virulence. The PqsC/PqsB complex catalyzes the condensation of 2-aminobenzoylacetate (2-ABA) and octanoyl-CoA to form HHQ. First, PqsC acquires an octanoyl group from octanoyl-CoA and forms an octanoyl-PqsC intermediate. Then, together with PqsB, it catalyzes the coupling of 2-ABA with the octanoate group, leading to decarboxylation and dehydration, and resulting in closure of the quinoline ring. The sequence is that of 2-heptyl-4(1H)-quinolone synthase subunit PqsC from Pseudomonas aeruginosa (strain ATCC 15692 / DSM 22644 / CIP 104116 / JCM 14847 / LMG 12228 / 1C / PRS 101 / PAO1).